A 181-amino-acid polypeptide reads, in one-letter code: Oligoribonuclease (181 aa).

In terms of domain architecture, Exonuclease spans 8-171 (LIWLDLEMTG…DDIKDSIMEL (164 aa)). Tyr-129 is an active-site residue.

It belongs to the oligoribonuclease family.

The protein localises to the cytoplasm. 3'-to-5' exoribonuclease specific for small oligoribonucleotides. The sequence is that of Oligoribonuclease from Pseudoalteromonas translucida (strain TAC 125).